The sequence spans 423 residues: 3-phosphoshikimate 1-carboxyvinyltransferase (423 aa).

Positions 19, 20, and 24 each coordinate 3-phosphoshikimate. Lys19 is a binding site for phosphoenolpyruvate. Phosphoenolpyruvate contacts are provided by Gly89 and Arg118. Positions 164, 165, 166, 192, 304, and 331 each coordinate 3-phosphoshikimate. Gln166 lines the phosphoenolpyruvate pocket. Asp304 functions as the Proton acceptor in the catalytic mechanism. Phosphoenolpyruvate is bound by residues Arg335 and Arg377.

It belongs to the EPSP synthase family. In terms of assembly, monomer.

It localises to the cytoplasm. The catalysed reaction is 3-phosphoshikimate + phosphoenolpyruvate = 5-O-(1-carboxyvinyl)-3-phosphoshikimate + phosphate. Its pathway is metabolic intermediate biosynthesis; chorismate biosynthesis. In terms of biological role, catalyzes the transfer of the enolpyruvyl moiety of phosphoenolpyruvate (PEP) to the 5-hydroxyl of shikimate-3-phosphate (S3P) to produce enolpyruvyl shikimate-3-phosphate and inorganic phosphate. This chain is 3-phosphoshikimate 1-carboxyvinyltransferase, found in Korarchaeum cryptofilum (strain OPF8).